The sequence spans 227 residues: Phosphoribosylformylglycinamidine synthase subunit PurQ (227 aa).

The 223-residue stretch at 3 to 225 (FAVIVFPGSN…LKQWRETYVV (223 aa)) folds into the Glutamine amidotransferase type-1 domain. C86 functions as the Nucleophile in the catalytic mechanism. Catalysis depends on residues H194 and E196.

In terms of assembly, part of the FGAM synthase complex composed of 1 PurL, 1 PurQ and 2 PurS subunits.

It localises to the cytoplasm. It catalyses the reaction N(2)-formyl-N(1)-(5-phospho-beta-D-ribosyl)glycinamide + L-glutamine + ATP + H2O = 2-formamido-N(1)-(5-O-phospho-beta-D-ribosyl)acetamidine + L-glutamate + ADP + phosphate + H(+). It carries out the reaction L-glutamine + H2O = L-glutamate + NH4(+). Its pathway is purine metabolism; IMP biosynthesis via de novo pathway; 5-amino-1-(5-phospho-D-ribosyl)imidazole from N(2)-formyl-N(1)-(5-phospho-D-ribosyl)glycinamide: step 1/2. Functionally, part of the phosphoribosylformylglycinamidine synthase complex involved in the purines biosynthetic pathway. Catalyzes the ATP-dependent conversion of formylglycinamide ribonucleotide (FGAR) and glutamine to yield formylglycinamidine ribonucleotide (FGAM) and glutamate. The FGAM synthase complex is composed of three subunits. PurQ produces an ammonia molecule by converting glutamine to glutamate. PurL transfers the ammonia molecule to FGAR to form FGAM in an ATP-dependent manner. PurS interacts with PurQ and PurL and is thought to assist in the transfer of the ammonia molecule from PurQ to PurL. This is Phosphoribosylformylglycinamidine synthase subunit PurQ from Bacillus thuringiensis (strain Al Hakam).